Reading from the N-terminus, the 663-residue chain is UvrABC system protein B (663 aa).

In terms of domain architecture, Helicase ATP-binding spans Asp-31–Glu-271. Position 44 to 51 (Gly-44 to Thr-51) interacts with ATP. A Beta-hairpin motif is present at residues Tyr-97–Val-120. The Helicase C-terminal domain occupies Gln-435–Ile-601. Residues Gln-627–Met-662 form the UVR domain.

Belongs to the UvrB family. In terms of assembly, forms a heterotetramer with UvrA during the search for lesions. Interacts with UvrC in an incision complex.

The protein resides in the cytoplasm. Its function is as follows. The UvrABC repair system catalyzes the recognition and processing of DNA lesions. A damage recognition complex composed of 2 UvrA and 2 UvrB subunits scans DNA for abnormalities. Upon binding of the UvrA(2)B(2) complex to a putative damaged site, the DNA wraps around one UvrB monomer. DNA wrap is dependent on ATP binding by UvrB and probably causes local melting of the DNA helix, facilitating insertion of UvrB beta-hairpin between the DNA strands. Then UvrB probes one DNA strand for the presence of a lesion. If a lesion is found the UvrA subunits dissociate and the UvrB-DNA preincision complex is formed. This complex is subsequently bound by UvrC and the second UvrB is released. If no lesion is found, the DNA wraps around the other UvrB subunit that will check the other stand for damage. The polypeptide is UvrABC system protein B (Streptococcus equi subsp. zooepidemicus (strain H70)).